A 130-amino-acid polypeptide reads, in one-letter code: MTTSSYFLLVALGLLLYVRQSFSTHEHTCQLDDPAHPQGKCGSDLVNYHEEKCEEEEARRGGTNDGGKKRRRASPLWKRRRFLSMLKARAKRTGYKGIACECCQHYCTDQEFINYCPPVTESSSSSSSAA.

An N-terminal signal peptide occupies residues 1–24 (MTTSSYFLLVALGLLLYVRQSFST). Cystine bridges form between cysteine 29–cysteine 100, cysteine 41–cysteine 103, cysteine 53–cysteine 116, and cysteine 102–cysteine 107. A 4-hydroxyproline; partial modification is found at proline 34. Residues 54–74 (EEEEARRGGTNDGGKKRRRAS) are disordered. The propeptide at 59 to 92 (RRGGTNDGGKKRRRASPLWKRRRFLSMLKARAKR) is c peptide. A 4-carboxyglutamate; partial modification is found at glutamate 111.

It belongs to the insulin family. As to quaternary structure, heterodimer of A and B chains; disulfide-linked. As to expression, expressed by the venom gland.

It localises to the secreted. Its function is as follows. This venom insulin, from a fish-hunting cone snail, facilitates prey capture by rapidly inducing hypoglycemic shock. Intraperitoneal injection of this peptide into zebrafish lowers blood glucose with the same potency than human insulin. In vivo, when applied to water, this peptide reduces overall locomotor activity of zebrafish larvae, observed as a significant decrease in the percentage of time spent swimming and movement frequency. This is Con-Ins G2 from Conus geographus (Geography cone).